A 1434-amino-acid chain; its full sequence is Probable deoxyribonuclease RhsA (1434 aa).

The tract at residues 14-42 (AMHAGNRPNPPDDRPQPCRGKPPTSPGKT) is disordered. 2 helical membrane-spanning segments follow: residues 48-68 (FLGA…VAAA) and 70-90 (VFLV…LAVF). YD repeat units lie at residues 486-521 (YDAA…CADG), 592-628 (DDTG…LGRE), and 847-876 (YDAR…LTEV).

It belongs to the RHS/WapA nuclease family.

It is found in the membrane. Its function is as follows. Toxic component of a toxin-immunity protein module, which functions as a cellular contact-dependent growth inhibition (CDI) system. This protein may be a nuclease that is specifically inhibited by its cognate immunity protein RhsAI. Upon expression of the C-terminus (residues 1284-1434) in E.coli growth is inhibited, cells elongate, nucleoids condense and plasmid DNA is degraded; these effects are blocked specifically by cognate immunity protein RshIA. Cell contact is necessary for growth inhibition. This chain is Probable deoxyribonuclease RhsA (rhsA), found in Dickeya dadantii (strain 3937) (Erwinia chrysanthemi (strain 3937)).